The following is a 232-amino-acid chain: MYCPQCGHQTDGGNFCEKCGSPLPGQSGHQHAAQTGAAAKQAAKQFGSFVLSVLKRPYQECKATGGEQLISAIITMVLFSLLTPLMFYILFSDGPGSVSFTAIFLEPTIYFILFLFGLHACIFFALKIAGNQVSFKDSFSRFGAFLIPFTAILILALFFFLLHTDICFTILAVGLIGAFFAIPPAMLSSYQHSYKGKVDFIYSTIVIYLIICVTFQLIIEHYVKEIFRYMLF.

Transmembrane regions (helical) follow at residues 69 to 91 (LISA…YILF), 104 to 126 (FLEP…FFAL), 139 to 161 (FSRF…FFFL), 166 to 188 (ICFT…AMLS), and 200 to 219 (FIYS…QLII).

It localises to the cell membrane. This is an uncharacterized protein from Bacillus subtilis (strain 168).